Here is a 447-residue protein sequence, read N- to C-terminus: tRNA-2-methylthio-N(6)-dimethylallyladenosine synthase (447 aa).

The MTTase N-terminal domain maps to 3 to 120; sequence KKLYIETHGC…LPEMIDAART (118 aa). [4Fe-4S] cluster-binding residues include Cys-12, Cys-49, Cys-83, Cys-157, Cys-161, and Cys-164. The Radical SAM core domain occupies 143–375; the sequence is RVDGPSAFVS…QHRINQYGFE (233 aa). Positions 378–442 constitute a TRAM domain; it reads RRMVGTVQRI…PHSLRGTLLD (65 aa).

The protein belongs to the methylthiotransferase family. MiaB subfamily. As to quaternary structure, monomer. The cofactor is [4Fe-4S] cluster.

It localises to the cytoplasm. The catalysed reaction is N(6)-dimethylallyladenosine(37) in tRNA + (sulfur carrier)-SH + AH2 + 2 S-adenosyl-L-methionine = 2-methylsulfanyl-N(6)-dimethylallyladenosine(37) in tRNA + (sulfur carrier)-H + 5'-deoxyadenosine + L-methionine + A + S-adenosyl-L-homocysteine + 2 H(+). In terms of biological role, catalyzes the methylthiolation of N6-(dimethylallyl)adenosine (i(6)A), leading to the formation of 2-methylthio-N6-(dimethylallyl)adenosine (ms(2)i(6)A) at position 37 in tRNAs that read codons beginning with uridine. The chain is tRNA-2-methylthio-N(6)-dimethylallyladenosine synthase from Ectopseudomonas mendocina (strain ymp) (Pseudomonas mendocina).